The primary structure comprises 141 residues: Large ribosomal subunit protein bL21 (141 aa).

The segment at 111-141 is disordered; that stretch reads ATAPSRTEAAPESNPEAAPSAAATGIPADEE. Over residues 118 to 133 the composition is skewed to low complexity; that stretch reads EAAPESNPEAAPSAAA.

The protein belongs to the bacterial ribosomal protein bL21 family. Part of the 50S ribosomal subunit. Contacts protein L20.

This protein binds to 23S rRNA in the presence of protein L20. The polypeptide is Large ribosomal subunit protein bL21 (Synechococcus sp. (strain JA-2-3B'a(2-13)) (Cyanobacteria bacterium Yellowstone B-Prime)).